The sequence spans 146 residues: Ribonuclease H (146 aa).

Residues 1–141 (MKHVDIFTDG…ADELARKGME (141 aa)) form the RNase H type-1 domain. Mg(2+) contacts are provided by Asp-9, Glu-47, Asp-69, and Asp-133. The segment at 123–146 (HAGHPENERADELARKGMEPFKRR) is disordered. Basic and acidic residues predominate over residues 125 to 146 (GHPENERADELARKGMEPFKRR).

This sequence belongs to the RNase H family. In terms of assembly, monomer. The cofactor is Mg(2+).

It is found in the cytoplasm. The enzyme catalyses Endonucleolytic cleavage to 5'-phosphomonoester.. Its function is as follows. Endonuclease that specifically degrades the RNA of RNA-DNA hybrids. The polypeptide is Ribonuclease H (Agrobacterium fabrum (strain C58 / ATCC 33970) (Agrobacterium tumefaciens (strain C58))).